Consider the following 372-residue polypeptide: Glycerol-3-phosphate dehydrogenase [NAD(+)] (372 aa).

Residues 1–16 show a composition bias toward polar residues; it reads MAPSELNCTHQNQHSS. The disordered stretch occupies residues 1–23; that stretch reads MAPSELNCTHQNQHSSGYDGPRS. NAD(+)-binding positions include 29-34, Phe-60, Phe-117, Lys-140, and Ala-173; that span reads GSGNWG. Lys-140 serves as a coordination point for substrate. Residue Lys-225 is the Proton acceptor of the active site. 3 residues coordinate NAD(+): Arg-289, Lys-318, and Gln-320. 289 to 290 is a binding site for substrate; that stretch reads RN.

Belongs to the NAD-dependent glycerol-3-phosphate dehydrogenase family.

It catalyses the reaction sn-glycerol 3-phosphate + NAD(+) = dihydroxyacetone phosphate + NADH + H(+). This Cuphea lanceolata (Cigar flower) protein is Glycerol-3-phosphate dehydrogenase [NAD(+)] (GPDH).